The chain runs to 60 residues: Large ribosomal subunit protein uL30 (60 aa).

This sequence belongs to the universal ribosomal protein uL30 family. As to quaternary structure, part of the 50S ribosomal subunit.

The chain is Large ribosomal subunit protein uL30 from Amoebophilus asiaticus (strain 5a2).